A 191-amino-acid chain; its full sequence is Dephospho-CoA kinase (191 aa).

The DPCK domain maps to 3-191 (AIGITGSYAS…KLIKDLECRV (189 aa)). ATP is bound at residue 11 to 16 (ASGKTF).

This sequence belongs to the CoaE family.

Its subcellular location is the cytoplasm. The enzyme catalyses 3'-dephospho-CoA + ATP = ADP + CoA + H(+). The protein operates within cofactor biosynthesis; coenzyme A biosynthesis; CoA from (R)-pantothenate: step 5/5. Functionally, catalyzes the phosphorylation of the 3'-hydroxyl group of dephosphocoenzyme A to form coenzyme A. In Rickettsia conorii (strain ATCC VR-613 / Malish 7), this protein is Dephospho-CoA kinase.